Reading from the N-terminus, the 549-residue chain is MFS-type transporter TwmF (549 aa).

A run of 4 helical transmembrane segments spans residues 29–49 (IVIGLGITNLLAALENTVLTI), 63–83 (NFIWVTNAFFLSSTAILPLFG), 99–119 (VAIFVLGSGLCGGASTGAMLI), and 126–146 (GVGSGGIIMLSSIIISDLVPL). Asn-151 carries N-linked (GlcNAc...) asparagine glycosylation. A run of 10 helical transmembrane segments spans residues 155–175 (ILMSILGIGSALGPLIGGAIV), 182–202 (WVFYLNLPIGGVSFVFLFIFL), 221–241 (LVGNAIVIASTVAILYALSYA), 249–269 (SWHTLVPLLVGFLGLFIFAGL), 291–311 (IILAINTFVSAALLYWCLFFL), 328–348 (VALLPISLLGIPGSMVGAIAL), 355–375 (KPVHIFAFALQTLGLGLFTLF), 390–410 (IVAFGGGMIFTTMLPAFQAFI), 421–441 (AWYFIRLFGHIWGVAIPAAIF), and 502–522 (VSIAFAGVAFLLTLLEKDVGL).

This sequence belongs to the major facilitator superfamily.

The protein localises to the membrane. MFS efflux transporter; part of the gene cluster that mediates the biosynthesis of wortmanamides A and B, reduced long-chain polyketides amidated with a specific omega-amino acid, 5-aminopentanoic acid (5PA). The protein is MFS-type transporter TwmF of Talaromyces wortmannii (Penicillium wortmannii).